We begin with the raw amino-acid sequence, 807 residues long: MLVSLSWLKDLVQVDDSVDDLAERLSMAGFEVENIDDLSARSQGVVVGHVLTRDKHPNADKLSVCTVDIGAKESVQIVCGAANVRAGIHVPVATVGAVLPAVDLTIKAGELRGVASNGMICSLSELGLTAESSGIAILEDTTKEIPAVGTPVAALFGLDDAVLELAITANRPDGLSMVGIAREVAALTNAELSLPLLNHTPEQEPLQAELDGSYYAVACVEGVQGGQESPPWIQQRLNRAGINAVNAVVDITNLVMLEQGQPLHAFDAEALESLTGKPVDAASFAVRPAKDQETFIGLDDQSLCLDPRVQVVTCHDRAIAIAGVMGSRDSAVSDSTTKIWLESAMFSPIRVRQSSRAVGLRTDASSRFEKGLPPEVTLACSQRAIELLSDQFACRVNGRWVGGEGPRTPVPLQLRRDALHQLLGPIDTDSGPVDLADHTIEQCLTALGCELESTDEGWAVMTPPSRRQDLHREVDLIEEVARLVGFDKFGSHLPDPVSPGSLTSRQQAERRLRRLFCSTGLQEITTLSLVGSSDGDARIAISNPLLAETSHLRTNLWEEHLQICVRNLKASMAGCSIFEVGNTYSGTPESVVQSGIISGVICGDRRLERWSTSGKYQAPNYYEARGVLSRVMEALHLELSDRPLADDARLHPGRAATLVMEGRPLGCFGQLHPALADDLSLPESTYLFELDLERLLDATTRTNRWTPIYKSFPTVPASERDLAVVVDRNSNAADLIQAIRKAGKPLLEHVELIDRFEGDQLGDQKVSQAFRLRYRSQNETLTDDKIQPVHDKVRAALSKQFKAELRS.

The tRNA-binding domain occupies 39–153 (SARSQGVVVG…EIPAVGTPVA (115 aa)). Residues 407-491 (RTPVPLQLRR…RLVGFDKFGS (85 aa)) enclose the B5 domain. Positions 469, 475, 478, and 479 each coordinate Mg(2+). Residues 713 to 806 (PTVPASERDL…LSKQFKAELR (94 aa)) enclose the FDX-ACB domain.

It belongs to the phenylalanyl-tRNA synthetase beta subunit family. Type 1 subfamily. As to quaternary structure, tetramer of two alpha and two beta subunits. Mg(2+) serves as cofactor.

It is found in the cytoplasm. It catalyses the reaction tRNA(Phe) + L-phenylalanine + ATP = L-phenylalanyl-tRNA(Phe) + AMP + diphosphate + H(+). The chain is Phenylalanine--tRNA ligase beta subunit from Synechococcus sp. (strain CC9902).